We begin with the raw amino-acid sequence, 7031 residues long: Extracellular matrix-binding protein EbhB (7031 aa).

A signal peptide spans 1–39 (MNYRDKIQKFSIRKYTVGTFSTVIATLVFLGFNTSQAHA). Residues 41–59 (ETNQPASVVKQKQQSNNEQ) are compositionally biased toward polar residues. 5 disordered regions span residues 41–86 (ETNQ…HENE), 99–152 (KVAQ…GNDN), 250–277 (PQRQQTSRRSNRIQTRSVESRAAEPRSV), 1342–1373 (NNITGNEKSQAEAGGRPNFRTTGYSQSNATTD), and 2418–2438 (TITPKAGTGHSVSSNPSTLTA). Residues 65 to 80 (SQVQNSQNSQNGQSLS) show a composition bias toward low complexity. Polar residues predominate over residues 99 to 117 (KVAQSSTTNDEQPASQNVN). Basic and acidic residues predominate over residues 130–140 (PDKEQSKHKQN). 4 stretches are compositionally biased toward polar residues: residues 141–151 (ESQSANKNGND), 250–266 (PQRQQTSRRSNRIQTRS), 1360–1373 (FRTTGYSQSNATTD), and 2427–2438 (HSVSSNPSTLTA). 38 FIVAR domains span residues 2524-2580 (AKNH…VSDA), 2610-2666 (SKNN…ISDE), 2687-2750 (DTHA…VQSA), 2780-2836 (AKTK…IAAE), 2864-2919 (AKTQ…IRQN), 2947-3002 (AKNQ…INTN), 3030-3085 (AKTQ…INDK), 3154-3212 (AMTK…VNQK), 3280-3339 (AMTG…VNNA), 3407-3465 (AMGN…VNRA), 3533-3591 (AMGN…VTEA), 3659-3717 (AMNT…ITQK), 3785-3843 (AMAS…VEAA), 3911-3969 (AMGN…VEQA), 4037-4095 (AMGT…VTAA), 4163-4221 (AMKG…ITQA), 4289-4347 (QMGN…VEAA), 4415-4473 (AMAN…VENA), 4541-4599 (AMGT…INQI), 4667-4725 (AMGQ…VDRA), 4793-4851 (AMNS…VDNA), 4919-4977 (AMGA…INGM), 5045-5103 (AMTA…VNSA), 5171-5229 (AMKG…ITQV), 5297-5355 (AMHS…VEQA), 5423-5481 (AMGQ…VERA), 5549-5607 (AMTA…VTNA), 5675-5733 (AMKG…INQA), 5801-5859 (AMTN…VETA), 5927-5985 (AMSN…VEQA), 6053-6111 (AMNQ…INQK), 6179-6236 (AMGN…VQAA), 6304-6362 (AMGQ…VEAA), 6430-6488 (AMQR…VEQA), 6556-6614 (AMDQ…VTAA), 6682-6740 (AMNQ…VTQA), 6818-6866 (DKDQ…VEAA), and 6934-6992 (AMGN…VEAA).

This is Extracellular matrix-binding protein EbhB (ebhB) from Staphylococcus aureus (strain Newman).